The primary structure comprises 412 residues: Class E basic helix-loop-helix protein 40 (412 aa).

The disordered stretch occupies residues 1 to 21 (MERIPSAQPPPTCLPKAPGLE). The essential for interaction with BMAL1, E-box binding and repressor activity against the CLOCK-BMAL1 heterodimer stretch occupies residues 1–139 (MERIPSAQPP…LSGRNVEAGQ (139 aa)). Positions 52–107 (TYKLPHRLIEKKRRDRINECIAQLKDLLPEHLKLTTLGHLEKAVVLELTLKHVKAL) constitute a bHLH domain. The segment at 75-79 (LKDLL) is necessary for interaction with RXRA and repressor activity against RXRA. One can recognise an Orange domain in the interval 142–175 (FCSGFQTCAREVLQYLAKHENTRDLKSSQLVTHL). Residue Lys-159 forms a Glycyl lysine isopeptide (Lys-Gly) (interchain with G-Cter in SUMO1, SUMO2 and SUMO3) linkage. A Glycyl lysine isopeptide (Lys-Gly) (interchain with G-Cter in SUMO2) cross-link involves residue Lys-167. Disordered stretches follow at residues 182-257 (LLQG…LRVE) and 279-298 (KQES…SDDE). Ser-235 bears the Phosphoserine mark. Residues 248 to 257 (ESEKSELRVE) show a composition bias toward basic and acidic residues. Residue Lys-279 forms a Glycyl lysine isopeptide (Lys-Gly) (interchain with G-Cter in SUMO1); alternate linkage. A Glycyl lysine isopeptide (Lys-Gly) (interchain with G-Cter in SUMO1, SUMO2 and SUMO3); alternate cross-link involves residue Lys-279. A Glycyl lysine isopeptide (Lys-Gly) (interchain with G-Cter in SUMO2); alternate cross-link involves residue Lys-279. Lys-288 participates in a covalent cross-link: Glycyl lysine isopeptide (Lys-Gly) (interchain with G-Cter in SUMO2). Ser-383 bears the Phosphoserine mark.

In terms of assembly, homodimer. Heterodimer with BHLHE41/DEC2. Interacts with TCF3/E47. Interacts with ubiquitin-conjugating enzyme UBE2I/UBC9. Interacts with HDAC1, SUMO1, RXRA and BMAL1. Post-translationally, ubiquitinated; which may lead to proteasomal degradation. Sumoylation inhibits its ubiquitination and promotes its negative regulation of the CLOCK-BMAL1 heterodimer transcriptional activator activity.

It localises to the cytoplasm. The protein localises to the nucleus. Its function is as follows. Transcriptional repressor involved in the regulation of the circadian rhythm by negatively regulating the activity of the clock genes and clock-controlled genes. Acts as the negative limb of a novel autoregulatory feedback loop (DEC loop) which differs from the one formed by the PER and CRY transcriptional repressors (PER/CRY loop). Both these loops are interlocked as it represses the expression of PER1/2 and in turn is repressed by PER1/2 and CRY1/2. Represses the activity of the circadian transcriptional activator: CLOCK-BMAL1|BMAL2 heterodimer by competing for the binding to E-box elements (5'-CACGTG-3') found within the promoters of its target genes. Negatively regulates its own expression and the expression of DBP and BHLHE41/DEC2. Acts as a corepressor of RXR and the RXR-LXR heterodimers and represses the ligand-induced RXRA and NR1H3/LXRA transactivation activity. May be involved in the regulation of chondrocyte differentiation via the cAMP pathway. Represses the transcription of NR0B2 and attentuates the transactivation of NR0B2 by the CLOCK-BMAL1 complex. Drives the circadian rhythm of blood pressure through transcriptional repression of ATP1B1 in the cardiovascular system. The polypeptide is Class E basic helix-loop-helix protein 40 (BHLHE40) (Ovis aries (Sheep)).